Here is a 163-residue protein sequence, read N- to C-terminus: MSLLLLVVSALHILILILLFVATLDKSWWTLPGKESLNLWYDCTWNSDNKTWACSNVSENGWLKAVQVLMVLSLILCCLSFILFMFQLYTMRRGGLFYATGFCQLCTSVAVFTGALIYAIHAEEILADRPSGGSFGYCFALAWVAFPLALASGIIYIHLRKRE.

Residues 4 to 24 (LLLVVSALHILILILLFVATL) traverse the membrane as a helical segment. Asn49 and Asn56 each carry an N-linked (GlcNAc...) asparagine glycan. 3 helical membrane-spanning segments follow: residues 66 to 86 (VQVL…LFMF), 100 to 120 (TGFC…IYAI), and 139 to 159 (FALA…YIHL).

The protein belongs to the PMP-22/EMP/MP20 family.

The protein localises to the membrane. Probably involved in cell proliferation and cell-cell interactions. The polypeptide is Epithelial membrane protein 3 (EMP3) (Bos taurus (Bovine)).